The primary structure comprises 435 residues: Kynurenine--oxoglutarate transaminase (435 aa).

Glycine 46 and asparagine 198 together coordinate substrate. Lysine 262 bears the N6-(pyridoxal phosphate)lysine mark. A substrate-binding site is contributed by arginine 413.

This sequence belongs to the class-I pyridoxal-phosphate-dependent aminotransferase family. As to quaternary structure, homodimer. Pyridoxal 5'-phosphate serves as cofactor.

The protein resides in the cytoplasm. The enzyme catalyses L-kynurenine + 2-oxoglutarate = kynurenate + L-glutamate + H2O. It catalyses the reaction 3-phenylpyruvate + L-glutamine = 2-oxoglutaramate + L-phenylalanine. It carries out the reaction an S-substituted L-cysteine + H2O = a thiol + pyruvate + NH4(+). It functions in the pathway amino-acid degradation; L-kynurenine degradation; kynurenate from L-kynurenine: step 1/2. Functionally, catalyzes the irreversible transamination of the L-tryptophan metabolite L-kynurenine to form kynurenic acid (KA). Metabolizes the cysteine conjugates of certain halogenated alkenes and alkanes to form reactive metabolites. Catalyzes the beta-elimination of S-conjugates and Se-conjugates of L-(seleno)cysteine, resulting in the cleavage of the C-S or C-Se bond. The chain is Kynurenine--oxoglutarate transaminase (ccbl) from Dictyostelium discoideum (Social amoeba).